Consider the following 466-residue polypeptide: Asparagine--tRNA ligase (466 aa).

This sequence belongs to the class-II aminoacyl-tRNA synthetase family. Homodimer.

Its subcellular location is the cytoplasm. The catalysed reaction is tRNA(Asn) + L-asparagine + ATP = L-asparaginyl-tRNA(Asn) + AMP + diphosphate + H(+). The sequence is that of Asparagine--tRNA ligase from Vibrio vulnificus (strain YJ016).